We begin with the raw amino-acid sequence, 468 residues long: Argininosuccinate lyase (468 aa).

Ser33, Asn121, and Thr166 together coordinate 2-(N(omega)-L-arginino)succinate. Catalysis depends on His167, which acts as the Proton acceptor. Catalysis depends on Ser288, which acts as the Proton donor. Positions 296, 328, 333, and 336 each coordinate 2-(N(omega)-L-arginino)succinate.

It belongs to the lyase 1 family. Argininosuccinate lyase subfamily. Homotetramer.

It carries out the reaction 2-(N(omega)-L-arginino)succinate = fumarate + L-arginine. Its pathway is amino-acid biosynthesis; L-arginine biosynthesis; L-arginine from L-ornithine and carbamoyl phosphate: step 3/3. In Candida albicans (Yeast), this protein is Argininosuccinate lyase (ARG4).